A 656-amino-acid chain; its full sequence is DNA ligase (656 aa).

NAD(+)-binding positions include 32–36 (DAVYD) and 81–82 (SL). K112 acts as the N6-AMP-lysine intermediate in catalysis. Positions 133, 167, and 306 each coordinate NAD(+). C400, C403, C416, and C421 together coordinate Zn(2+). The region spanning 577–656 (KSSSVFNNKT…ELLKRLKELD (80 aa)) is the BRCT domain.

Belongs to the NAD-dependent DNA ligase family. LigA subfamily. Requires Mg(2+) as cofactor. Mn(2+) serves as cofactor.

It catalyses the reaction NAD(+) + (deoxyribonucleotide)n-3'-hydroxyl + 5'-phospho-(deoxyribonucleotide)m = (deoxyribonucleotide)n+m + AMP + beta-nicotinamide D-nucleotide.. Functionally, DNA ligase that catalyzes the formation of phosphodiester linkages between 5'-phosphoryl and 3'-hydroxyl groups in double-stranded DNA using NAD as a coenzyme and as the energy source for the reaction. It is essential for DNA replication and repair of damaged DNA. This chain is DNA ligase, found in Helicobacter pylori (strain HPAG1).